Consider the following 126-residue polypeptide: Glycine cleavage system H protein (126 aa).

Positions 22–104 (VAYVGITDYA…YGEGWLIKMK (83 aa)) constitute a Lipoyl-binding domain. An N6-lipoyllysine modification is found at Lys63.

Belongs to the GcvH family. The glycine cleavage system is composed of four proteins: P, T, L and H. It depends on (R)-lipoate as a cofactor.

Functionally, the glycine cleavage system catalyzes the degradation of glycine. The H protein shuttles the methylamine group of glycine from the P protein to the T protein. The chain is Glycine cleavage system H protein from Bacteroides fragilis (strain ATCC 25285 / DSM 2151 / CCUG 4856 / JCM 11019 / LMG 10263 / NCTC 9343 / Onslow / VPI 2553 / EN-2).